The chain runs to 275 residues: Prohibitin-1 (275 aa).

Positions 106–109 match the AIM motif; that stretch reads YQNL.

Belongs to the prohibitin family. In terms of assembly, the mitochondrial prohibitin complex consists of two subunits (PHB1 and PHB2). The subunits assemble into a membrane-associated ring-shaped supercomplex of approximately 1 mDa. Interacts with ATG24/SNX4; the interaction is direct and plays a role in mitophagy.

The protein localises to the mitochondrion inner membrane. Its function is as follows. Prohibitin probably acts as a holdase/unfoldase for the stabilization of newly synthesized mitochondrial proteins. Involved in mitophagy. Required for the switch to necrotrophic growth. This Colletotrichum higginsianum (strain IMI 349063) (Crucifer anthracnose fungus) protein is Prohibitin-1.